Here is a 331-residue protein sequence, read N- to C-terminus: MPEILDQARTQVLENGVGLDEAGALAVLNLPDEHLPAALQLAHEVRMRWCGPEVEVEGIVSLKTGGCPEDCHFCSQSGLFTSPVRAVWLDIPSLVEAAKQTAKTGATEFCIVAAVRGPDDRLMRQLREGVAAIRAEVDIHVAASVGMLTQEQVDELVEMGVHRYNHNLETCRSYFPNVVTTHSWEERWETLRMVRASGMEVCCGGILGLGETVEQRAEFAAQLAELDPHEVPLNFLNPRPGTPLGDRPVVEGKDALRAIAAFRLAMPRTILRYAGGREITLGDLGTRSGLLGGINAVIVGNYLTTLGRPATTDLELLDDLKMPVKALSATL.

The Radical SAM core domain occupies 52–277; the sequence is PEVEVEGIVS…RTILRYAGGR (226 aa). Cys67, Cys71, and Cys74 together coordinate [4Fe-4S] cluster. [2Fe-2S] cluster is bound by residues Cys110, Cys202, and Arg272.

It belongs to the radical SAM superfamily. Biotin synthase family. As to quaternary structure, homodimer. [4Fe-4S] cluster serves as cofactor. It depends on [2Fe-2S] cluster as a cofactor.

It catalyses the reaction (4R,5S)-dethiobiotin + (sulfur carrier)-SH + 2 reduced [2Fe-2S]-[ferredoxin] + 2 S-adenosyl-L-methionine = (sulfur carrier)-H + biotin + 2 5'-deoxyadenosine + 2 L-methionine + 2 oxidized [2Fe-2S]-[ferredoxin]. The protein operates within cofactor biosynthesis; biotin biosynthesis; biotin from 7,8-diaminononanoate: step 2/2. Its function is as follows. Catalyzes the conversion of dethiobiotin (DTB) to biotin by the insertion of a sulfur atom into dethiobiotin via a radical-based mechanism. In Salinispora arenicola (strain CNS-205), this protein is Biotin synthase.